The chain runs to 340 residues: DNA-directed RNA polymerase subunit alpha (340 aa).

Positions 1 to 238 (MVDPIVTKNW…EQLSIFINFD (238 aa)) are alpha N-terminal domain (alpha-NTD). The alpha C-terminal domain (alpha-CTD) stretch occupies residues 255–340 (LNENLFRSVD…AAPQGGAPKV (86 aa)).

It belongs to the RNA polymerase alpha chain family. In terms of assembly, homodimer. The RNAP catalytic core consists of 2 alpha, 1 beta, 1 beta' and 1 omega subunit. When a sigma factor is associated with the core the holoenzyme is formed, which can initiate transcription.

It catalyses the reaction RNA(n) + a ribonucleoside 5'-triphosphate = RNA(n+1) + diphosphate. DNA-dependent RNA polymerase catalyzes the transcription of DNA into RNA using the four ribonucleoside triphosphates as substrates. The protein is DNA-directed RNA polymerase subunit alpha of Anaeromyxobacter dehalogenans (strain 2CP-1 / ATCC BAA-258).